The sequence spans 521 residues: Glucose-6-phosphate isomerase (521 aa).

The Proton donor role is filled by Glu327. Active-site residues include His358 and Lys486.

The protein belongs to the GPI family.

The protein resides in the cytoplasm. The catalysed reaction is alpha-D-glucose 6-phosphate = beta-D-fructose 6-phosphate. The protein operates within carbohydrate biosynthesis; gluconeogenesis. It functions in the pathway carbohydrate degradation; glycolysis; D-glyceraldehyde 3-phosphate and glycerone phosphate from D-glucose: step 2/4. Catalyzes the reversible isomerization of glucose-6-phosphate to fructose-6-phosphate. This Bordetella bronchiseptica (strain ATCC BAA-588 / NCTC 13252 / RB50) (Alcaligenes bronchisepticus) protein is Glucose-6-phosphate isomerase.